Consider the following 277-residue polypeptide: Ethanolamine ammonia-lyase small subunit (277 aa).

Val164, Glu185, and Cys214 together coordinate adenosylcob(III)alamin.

Belongs to the EutC family. As to quaternary structure, the basic unit is a heterodimer which dimerizes to form tetramers. The heterotetramers trimerize; 6 large subunits form a core ring with 6 small subunits projecting outwards. Requires adenosylcob(III)alamin as cofactor.

Its subcellular location is the bacterial microcompartment. It carries out the reaction ethanolamine = acetaldehyde + NH4(+). Its pathway is amine and polyamine degradation; ethanolamine degradation. Functionally, catalyzes the deamination of various vicinal amino-alcohols to oxo compounds. Allows this organism to utilize ethanolamine as the sole source of nitrogen and carbon in the presence of external vitamin B12. This Pseudomonas fluorescens (strain SBW25) protein is Ethanolamine ammonia-lyase small subunit.